We begin with the raw amino-acid sequence, 432 residues long: Gamma-glutamyl phosphate reductase (432 aa).

This sequence belongs to the gamma-glutamyl phosphate reductase family.

It localises to the cytoplasm. The catalysed reaction is L-glutamate 5-semialdehyde + phosphate + NADP(+) = L-glutamyl 5-phosphate + NADPH + H(+). The protein operates within amino-acid biosynthesis; L-proline biosynthesis; L-glutamate 5-semialdehyde from L-glutamate: step 2/2. Functionally, catalyzes the NADPH-dependent reduction of L-glutamate 5-phosphate into L-glutamate 5-semialdehyde and phosphate. The product spontaneously undergoes cyclization to form 1-pyrroline-5-carboxylate. The polypeptide is Gamma-glutamyl phosphate reductase (Methylorubrum extorquens (strain PA1) (Methylobacterium extorquens)).